The following is an 82-amino-acid chain: Three-finger toxin MicTx3 (82 aa).

The signal sequence occupies residues 1–21 (MKTLLLTLVVVTIMCLDLGYT). 4 cysteine pairs are disulfide-bonded: C24-C44, C38-C59, C63-C74, and C75-C80.

This sequence belongs to the three-finger toxin family. Short-chain subfamily. As to expression, expressed by the venom gland.

Its subcellular location is the secreted. Has been described to inhibit nicotinic acetylcholine receptor (nAChR) alpha-7/CHRNA7 subunits and to bind acetylcholine binding protein (AChBP) (Kd=29.5 nM). This is Three-finger toxin MicTx3 from Micrurus corallinus (Brazilian coral snake).